The primary structure comprises 511 residues: Probable cytochrome P450 4ac2 (511 aa).

Residues Glu-318 and Cys-455 each contribute to the heme site.

It belongs to the cytochrome P450 family. It depends on heme as a cofactor.

The protein resides in the endoplasmic reticulum membrane. It localises to the microsome membrane. In terms of biological role, may be involved in the metabolism of insect hormones and in the breakdown of synthetic insecticides. The polypeptide is Probable cytochrome P450 4ac2 (Cyp4ac2) (Drosophila melanogaster (Fruit fly)).